A 317-amino-acid chain; its full sequence is Pantothenate kinase (317 aa).

99 to 106 contributes to the ATP binding site; sequence GSVSVGKS.

It belongs to the prokaryotic pantothenate kinase family.

It is found in the cytoplasm. The enzyme catalyses (R)-pantothenate + ATP = (R)-4'-phosphopantothenate + ADP + H(+). It participates in cofactor biosynthesis; coenzyme A biosynthesis; CoA from (R)-pantothenate: step 1/5. In Histophilus somni (strain 2336) (Haemophilus somnus), this protein is Pantothenate kinase.